The sequence spans 165 residues: Transcription antitermination protein NusB (165 aa).

It belongs to the NusB family.

Its function is as follows. Involved in transcription antitermination. Required for transcription of ribosomal RNA (rRNA) genes. Binds specifically to the boxA antiterminator sequence of the ribosomal RNA (rrn) operons. This chain is Transcription antitermination protein NusB, found in Nitratidesulfovibrio vulgaris (strain DSM 19637 / Miyazaki F) (Desulfovibrio vulgaris).